We begin with the raw amino-acid sequence, 339 residues long: Ketol-acid reductoisomerase (NADP(+)) (339 aa).

Positions 1 to 182 constitute a KARI N-terminal Rossmann domain; sequence MRVYYDRDAD…GGGRSGIIET (182 aa). Residues 24 to 27, K48, S51, T53, and 83 to 86 contribute to the NADP(+) site; these read YGSQ and DELQ. Residue H108 is part of the active site. G134 provides a ligand contact to NADP(+). Residues 183 to 328 enclose the KARI C-terminal knotted domain; that stretch reads TFQEECETDL…AKLRGMMPWI (146 aa). 4 residues coordinate Mg(2+): D191, E195, E227, and E231. A substrate-binding site is contributed by S252.

It belongs to the ketol-acid reductoisomerase family. It depends on Mg(2+) as a cofactor.

The catalysed reaction is (2R)-2,3-dihydroxy-3-methylbutanoate + NADP(+) = (2S)-2-acetolactate + NADPH + H(+). The enzyme catalyses (2R,3R)-2,3-dihydroxy-3-methylpentanoate + NADP(+) = (S)-2-ethyl-2-hydroxy-3-oxobutanoate + NADPH + H(+). Its pathway is amino-acid biosynthesis; L-isoleucine biosynthesis; L-isoleucine from 2-oxobutanoate: step 2/4. It functions in the pathway amino-acid biosynthesis; L-valine biosynthesis; L-valine from pyruvate: step 2/4. Functionally, involved in the biosynthesis of branched-chain amino acids (BCAA). Catalyzes an alkyl-migration followed by a ketol-acid reduction of (S)-2-acetolactate (S2AL) to yield (R)-2,3-dihydroxy-isovalerate. In the isomerase reaction, S2AL is rearranged via a Mg-dependent methyl migration to produce 3-hydroxy-3-methyl-2-ketobutyrate (HMKB). In the reductase reaction, this 2-ketoacid undergoes a metal-dependent reduction by NADPH to yield (R)-2,3-dihydroxy-isovalerate. The chain is Ketol-acid reductoisomerase (NADP(+)) from Allorhizobium ampelinum (strain ATCC BAA-846 / DSM 112012 / S4) (Agrobacterium vitis (strain S4)).